Consider the following 295-residue polypeptide: DegV domain-containing protein MG326 (295 aa).

Residues 4–292 (TAIITDSTAS…IDAFSISLLI (289 aa)) enclose the DegV domain. Hexadecanoate is bound by residues threonine 63 and serine 95.

Its function is as follows. May bind long-chain fatty acids, such as palmitate, and may play a role in lipid transport or fatty acid metabolism. This Mycoplasma genitalium (strain ATCC 33530 / DSM 19775 / NCTC 10195 / G37) (Mycoplasmoides genitalium) protein is DegV domain-containing protein MG326.